A 431-amino-acid chain; its full sequence is Histidine--tRNA ligase (431 aa).

This sequence belongs to the class-II aminoacyl-tRNA synthetase family.

Its subcellular location is the cytoplasm. The catalysed reaction is tRNA(His) + L-histidine + ATP = L-histidyl-tRNA(His) + AMP + diphosphate + H(+). This Pyrococcus abyssi (strain GE5 / Orsay) protein is Histidine--tRNA ligase (hisS).